A 202-amino-acid polypeptide reads, in one-letter code: Stress enhanced protein 2, chloroplastic (202 aa).

A chloroplast-targeting transit peptide spans 1–60 (MAMATRAIRYQLPSPRFRAPRCESSEPIKQIQIQQRPRGGDLAENGKIVLQPRLCTLRSY). 2 helical membrane passes run 111–131 (LAMI…NSLF) and 142–162 (AIGA…LTIS).

The protein belongs to the ELIP/psbS family.

It is found in the plastid. It localises to the chloroplast thylakoid membrane. Its function is as follows. May be involved in non-photochemical quenching, a process that maintains the balance between dissipation and utilization of light energy to minimize generation of oxidizing molecules, thereby protecting the plant against photo-oxidative damage. May play a photoprotective role in the thylakoid membrane in response to light stress. This Arabidopsis thaliana (Mouse-ear cress) protein is Stress enhanced protein 2, chloroplastic.